The primary structure comprises 80 residues: U-poneritoxin(01)-Om3a (80 aa).

The signal sequence occupies residues 1-25 (MKPSGLALAFLVVFMMAIMYNSVQA). A propeptide spanning residues 26 to 39 (AAIADADAEAEAIA) is cleaved from the precursor.

This sequence belongs to the formicidae venom precursor-01 superfamily. Truncated sequences of this peptide have also been found in the venom. It is possible they have been cleaved in the venom. Expressed by the venom gland.

The protein resides in the secreted. Its function is as follows. Cationic amphipathic alpha-helical peptide with antimicrobial activities against E.coli (MIC=3.1 uM), S.aureus (MIC=25 uM), and S.cerevisiae (MIC=50 uM). Also shows histamine-releasing activity (37.5% at 10 uM). Does not show hemolytic activity, even at 50 uM. The polypeptide is U-poneritoxin(01)-Om3a (Odontomachus monticola (Trap-jaw ant)).